A 424-amino-acid polypeptide reads, in one-letter code: Tyrosine--tRNA ligase (424 aa).

Residue Tyr37 coordinates L-tyrosine. Positions 42–51 (PTADSLHLGH) match the 'HIGH' region motif. Residue Lys144 is modified to N6-acetyllysine. Residues Tyr175 and Gln179 each contribute to the L-tyrosine site. The short motif at 235-239 (KFGKT) is the 'KMSKS' region element. Lys238 is a binding site for ATP. Positions 357 to 414 (ADLMQALVDSELQPSRGQARKTIASNAITINGEKQSDPEYFFKEEDRLFGRFTLLRRG) constitute an S4 RNA-binding domain.

The protein belongs to the class-I aminoacyl-tRNA synthetase family. TyrS type 1 subfamily. In terms of assembly, homodimer.

It is found in the cytoplasm. The catalysed reaction is tRNA(Tyr) + L-tyrosine + ATP = L-tyrosyl-tRNA(Tyr) + AMP + diphosphate + H(+). Its function is as follows. Catalyzes the attachment of tyrosine to tRNA(Tyr) in a two-step reaction: tyrosine is first activated by ATP to form Tyr-AMP and then transferred to the acceptor end of tRNA(Tyr). This Shigella flexneri serotype 5b (strain 8401) protein is Tyrosine--tRNA ligase.